We begin with the raw amino-acid sequence, 153 residues long: Aspartate carbamoyltransferase regulatory chain (153 aa).

Cys-109, Cys-114, Cys-135, and Cys-138 together coordinate Zn(2+).

It belongs to the PyrI family. Contains catalytic and regulatory chains. Zn(2+) is required as a cofactor.

Involved in allosteric regulation of aspartate carbamoyltransferase. The polypeptide is Aspartate carbamoyltransferase regulatory chain (Natronomonas pharaonis (strain ATCC 35678 / DSM 2160 / CIP 103997 / JCM 8858 / NBRC 14720 / NCIMB 2260 / Gabara) (Halobacterium pharaonis)).